Here is a 456-residue protein sequence, read N- to C-terminus: Glutathione reductase (456 aa).

Ser-14, Gly-15, Glu-34, Thr-41, Cys-42, and Lys-50 together coordinate FAD. Residue Ser-14 coordinates glutathione. Cys-42 and Cys-47 are oxidised to a cystine. A glutathione-binding site is contributed by Tyr-99. Gly-115 is a binding site for FAD. 6 residues coordinate NADP(+): Ala-180, Ile-183, Glu-186, Arg-203, Arg-209, and Gly-267. Residue Asp-308 coordinates FAD. Glu-315 lines the NADP(+) pocket. FAD is bound at residue Thr-317. Arg-325 is a glutathione binding site. Residue Val-348 coordinates NADP(+). An FAD-binding site is contributed by His-445. The active-site Proton acceptor is His-445.

This sequence belongs to the class-I pyridine nucleotide-disulfide oxidoreductase family. As to quaternary structure, homodimer. FAD is required as a cofactor.

It is found in the cytoplasm. The catalysed reaction is 2 glutathione + NADP(+) = glutathione disulfide + NADPH + H(+). Catalyzes the reduction of glutathione disulfide (GSSG) to reduced glutathione (GSH). Constitutes the major mechanism to maintain a high GSH:GSSG ratio in the cytosol. The polypeptide is Glutathione reductase (gor) (Haemophilus influenzae (strain ATCC 51907 / DSM 11121 / KW20 / Rd)).